The sequence spans 61 residues: [Val1,Thr6]-bradykinyl-Val,Asp (61 aa).

An N-terminal signal peptide occupies residues 1–22 (MAFLKKSLFLVLFLGVVSLSFC). A propeptide spanning residues 23–48 (EEEEREEHEEEKREAEAAESAENLIS) is cleaved from the precursor. The tract at residues 27 to 61 (REEHEEEKREAEAAESAENLISKRVPPGFTPFRVD) is disordered.

In terms of tissue distribution, expressed by the skin glands. Expression levels in inguinal glands and granular glands are virtually the same.

The protein resides in the secreted. In terms of biological role, induces contraction of rat ileum smooth muscle (EC(50)=2.73 uM) but has no activity towards rat smooth muscle from tail artery, urinary bladder or uterus. Binds to both bradykinin receptor B1 (BDKRB1) and B2 (BDKRB2); the effect via BDKRB1 is stronger. This is [Val1,Thr6]-bradykinyl-Val,Asp from Physalaemus nattereri (Cuyaba dwarf frog).